Here is a 191-residue protein sequence, read N- to C-terminus: Ion-translocating oxidoreductase complex subunit B (191 aa).

A hydrophobic region spans residues 1 to 26; that stretch reads MSAIWIAIAVLSALSLVFGGLLGYAS. The region spanning 32–91 is the 4Fe-4S domain; sequence EEDPIVEQIDAILPQSQCGQCGYPGCRPYADAVGNNGEMINKCAPGGEQTMLKLAALLNV. Residues Cys-49, Cys-52, Cys-57, Cys-74, Cys-116, Cys-119, Cys-122, Cys-126, Cys-146, Cys-149, Cys-152, and Cys-156 each coordinate [4Fe-4S] cluster. 2 consecutive 4Fe-4S ferredoxin-type domains span residues 107–136 and 137–166; these read KVAWIDEANCIGCTKCIQACPVDAIVGATR and AMHTVLSDICTGCDLCVAPCPTDCIEMRPV.

It belongs to the 4Fe4S bacterial-type ferredoxin family. RnfB subfamily. The complex is composed of six subunits: RnfA, RnfB, RnfC, RnfD, RnfE and RnfG. It depends on [4Fe-4S] cluster as a cofactor.

Its subcellular location is the cell inner membrane. Part of a membrane-bound complex that couples electron transfer with translocation of ions across the membrane. This chain is Ion-translocating oxidoreductase complex subunit B, found in Erwinia tasmaniensis (strain DSM 17950 / CFBP 7177 / CIP 109463 / NCPPB 4357 / Et1/99).